The primary structure comprises 95 residues: Co-chaperonin GroES (95 aa).

This sequence belongs to the GroES chaperonin family. In terms of assembly, heptamer of 7 subunits arranged in a ring. Interacts with the chaperonin GroEL.

The protein resides in the cytoplasm. Functionally, together with the chaperonin GroEL, plays an essential role in assisting protein folding. The GroEL-GroES system forms a nano-cage that allows encapsulation of the non-native substrate proteins and provides a physical environment optimized to promote and accelerate protein folding. GroES binds to the apical surface of the GroEL ring, thereby capping the opening of the GroEL channel. The protein is Co-chaperonin GroES of Neisseria meningitidis serogroup C (strain 053442).